The following is a 325-amino-acid chain: 26S proteasome non-ATPase regulatory subunit 7 (325 aa).

Residues 8–142 (TIVHPTVLLS…TKSYVTVEEI (135 aa)) form the MPN domain. Positions 285–325 (KKADIINSTPPTTATSPSVADKGKEKEQNAFNGADKPSKQA) are disordered. Residues 292-302 (STPPTTATSPS) show a composition bias toward low complexity.

This sequence belongs to the peptidase M67A family.

Functionally, acts as a regulatory subunit of the 26S proteasome which is involved in the ATP-dependent degradation of ubiquitinated proteins. The protein is 26S proteasome non-ATPase regulatory subunit 7 (psmD7) of Dictyostelium discoideum (Social amoeba).